Reading from the N-terminus, the 515-residue chain is Protein NRT1/ PTR FAMILY 4.1 (515 aa).

The next 12 membrane-spanning stretches (helical) occupy residues 24–44 (GIKAAFIACVVETMENMVFLA), 71–91 (FVGTSFLLTIFGGFVADSFLT), 93–113 (FAAFVLFGSIELLGLIMLTLQ), 134–154 (VLFTGLYAIAIGVGGVKGSLP), 168–188 (LISGFFNWYFFSVCLGGFLAV), 204–224 (FTISTAVLASAIFVFVAGCPM), 298–318 (FLALLPIFGSTIIMNCCVAQM), 339–359 (IPVASLNAIPLLCMLSSLALY), 381–401 (IGYGLALTSISMAVAAIVEVK), 413–433 (ISVFWLELQFVMLSLSDMLTV), 461–481 (AMGFFLSSVLVEVVNGITGWL), and 492–512 (LFYLVLCVLNTLNLFNYIFWA).

Belongs to the major facilitator superfamily. Proton-dependent oligopeptide transporter (POT/PTR) (TC 2.A.17) family. As to expression, expressed in siliques and flowers.

The protein resides in the membrane. Involved in (+) and (-)-abscisic acid transport (ABA) and in gibberellin import. The sequence is that of Protein NRT1/ PTR FAMILY 4.1 (NPF4.1) from Arabidopsis thaliana (Mouse-ear cress).